The primary structure comprises 361 residues: Phosphoserine aminotransferase (361 aa).

L-glutamate is bound at residue Arg-43. Residues 77 to 78, Trp-103, Thr-153, Asp-172, and Gln-195 contribute to the pyridoxal 5'-phosphate site; that span reads AS. Residue Lys-196 is modified to N6-(pyridoxal phosphate)lysine. 237 to 238 is a binding site for pyridoxal 5'-phosphate; that stretch reads NT.

The protein belongs to the class-V pyridoxal-phosphate-dependent aminotransferase family. SerC subfamily. As to quaternary structure, homodimer. Requires pyridoxal 5'-phosphate as cofactor.

Its subcellular location is the cytoplasm. The enzyme catalyses O-phospho-L-serine + 2-oxoglutarate = 3-phosphooxypyruvate + L-glutamate. The catalysed reaction is 4-(phosphooxy)-L-threonine + 2-oxoglutarate = (R)-3-hydroxy-2-oxo-4-phosphooxybutanoate + L-glutamate. Its pathway is amino-acid biosynthesis; L-serine biosynthesis; L-serine from 3-phospho-D-glycerate: step 2/3. It functions in the pathway cofactor biosynthesis; pyridoxine 5'-phosphate biosynthesis; pyridoxine 5'-phosphate from D-erythrose 4-phosphate: step 3/5. In terms of biological role, catalyzes the reversible conversion of 3-phosphohydroxypyruvate to phosphoserine and of 3-hydroxy-2-oxo-4-phosphonooxybutanoate to phosphohydroxythreonine. This chain is Phosphoserine aminotransferase, found in Desulfotalea psychrophila (strain LSv54 / DSM 12343).